The following is a 95-amino-acid chain: Pyruvate dehydrogenase inhibitor (95 aa).

The protein belongs to the HesB/IscA family. Interacts with the E1 module of pyruvate dehydrogenase (PdhA-PdhB).

Acts as an inhibitor of the pyruvate dehydrogenase. Overexpression does not affect growth with glucose as the main carbon source, but it leads to a dramatic growth defect when cells are grown with pyruvate as the sole carbon source. This Bacillus subtilis (strain 168) protein is Pyruvate dehydrogenase inhibitor.